A 387-amino-acid polypeptide reads, in one-letter code: Patatin-05 (387 aa).

A signal peptide spans 1 to 23 (MATTKSVLVLIFMILATTSSTFA). Residues 32–230 (LSIDGGGIKG…TVADPALLSV (199 aa)) form the PNPLA domain. The short motif at 36–41 (GGGIKG) is the GXGXXG element. Residues 75-79 (GTSTG) carry the GXSXG motif. The active-site Nucleophile is the serine 77. N-linked (GlcNAc...) asparagine glycans are attached at residues asparagine 115 and asparagine 203. The active-site Proton acceptor is aspartate 216. Positions 216–218 (DGA) match the DGA/G motif.

It belongs to the patatin family. Tuber.

It localises to the vacuole. In terms of biological role, probable lipolytic acyl hydrolase (LAH), an activity which is thought to be involved in the response of tubers to pathogens. This Solanum tuberosum (Potato) protein is Patatin-05 (pat1-k1).